A 401-amino-acid polypeptide reads, in one-letter code: MVALVKPHGADELTPLYVADEDARVALQREAETLPSVVISSSAAANAVMMAAGYFTPLTGYMNKADMLSVADNLTTADGLFWPVPILNMLKDVSAIAGAKRIALRDPNVEGEPVIAVMDVAAIEEATDAELEAVAEKVFSTTDKQHPGVANFLAAGNFIVSGDIQVLNYSYFADDFPDTFRTAVSIRNEFVERGWNNVVAFQTRNPMHRAHEELCRMAQEALNADGILIHMLLGKLKAGDIPADVRDASIRKMVDVYFPPNTVMITGYGFDMLYAGPREAVLHAVFRQNCGCSHLIVGRDHAGVGDYYGAFDAQTIFQEKVPAGALEIKIFEADHTAYSKKLDRVVMMRDVPDHTKDDFVLLSGTKVREMLGQGIAPPPEFSRPEVAQILMDYYQALDAGK.

This sequence belongs to the sulfate adenylyltransferase family.

The catalysed reaction is sulfate + ATP + H(+) = adenosine 5'-phosphosulfate + diphosphate. The protein operates within sulfur metabolism; hydrogen sulfide biosynthesis; sulfite from sulfate: step 1/3. The chain is Sulfate adenylyltransferase from Alcanivorax borkumensis (strain ATCC 700651 / DSM 11573 / NCIMB 13689 / SK2).